The sequence spans 503 residues: 26S proteasome non-ATPase regulatory subunit 5 (503 aa).

Alanine 2 carries the N-acetylalanine modification.

The protein belongs to the proteasome subunit S5B/HSM3 family. Interacts with PSMC1, PSMC2, PSMD1 and PSMD6. Part of transient complex containing PSMD5, PSMC2, PSMC1 and PSMD2 formed during the assembly of the 26S proteasome.

Acts as a chaperone during the assembly of the 26S proteasome, specifically of the base subcomplex of the PA700/19S regulatory complex (RC). In the initial step of the base subcomplex assembly is part of an intermediate PSMD5:PSMC2:PSMC1:PSMD2 module which probably assembles with a PSMD10:PSMC4:PSMC5:PAAF1 module followed by dissociation of PSMD5. The sequence is that of 26S proteasome non-ATPase regulatory subunit 5 (PSMD5) from Bos taurus (Bovine).